The primary structure comprises 406 residues: Terminal uridylyltransferase 7 (406 aa).

The N-terminal 15 residues, Met-1 to His-15, are a transit peptide targeting the mitochondrion. UTP contacts are provided by residues Ser-54 and Ser-64 to Asp-65. Positions 65 and 67 each coordinate Mg(2+). Residues Gly-138–Ser-142, Lys-164, Lys-168, and Asn-181–Phe-183 contribute to the UTP site.

The protein belongs to the DNA polymerase type-B-like family. Component of the mitochondrial RNA editing core complex-like (RECC-like), also known as the editosome-like complex; only a small proportion of MEAT1 associates with the complex. Interacts with RNA-editing ligase REL1. Requires Mg(2+) as cofactor.

It localises to the mitochondrion matrix. The enzyme catalyses RNA(n) + UTP = RNA(n)-3'-uridine ribonucleotide + diphosphate. In terms of biological role, terminal uridylyltransferase which, as part of the mitochondrial RNA editing core-like complex (RECC-like), is involved in the post-transcriptional editing of mitochondrial RNA, a process involving the addition and deletion of uridine (U) nucleotides in the pre-mRNA. Specifically, catalyzes the addition of U to single-stranded RNA with a preference for a 3'-terminal U and adds the number of Us specified by a guide RNA (gRNA) to precleaved double-stranded RNA editing substrates. Essential for insect and bloodstream developmental forms viability. The chain is Terminal uridylyltransferase 7 from Trypanosoma brucei brucei.